Reading from the N-terminus, the 373-residue chain is Ubiquitin domain-containing protein DSK2 (373 aa).

In terms of domain architecture, Ubiquitin-like spans 1–76; that stretch reads MSLNIHIKSG…SVHLVKSQPK (76 aa). Residues K13 and K76 each participate in a glycyl lysine isopeptide (Lys-Gly) (interchain with G-Cter in ubiquitin) cross-link. The tract at residues 221–270 is disordered; it reads DPNAGMGSAGGAASAFPAPGGDAPEEGSNTNTTSSSNTGNNAGTNAGTNA. A compositionally biased stretch (low complexity) spans 231-270; that stretch reads GAASAFPAPGGDAPEEGSNTNTTSSSNTGNNAGTNAGTNA. Positions 327 to 371 constitute a UBA domain; that stretch reads PPEERYEHQLRQLNDMGFFDFDRNVAALRRSGGSVQGALDSLLNG.

It is found in the nucleus. Its function is as follows. Involved, with RAD23 in spindle pole body duplication. Involved in the ubiquitin-proteasome proteolytic pathway. The polypeptide is Ubiquitin domain-containing protein DSK2 (DSK2) (Saccharomyces cerevisiae (strain ATCC 204508 / S288c) (Baker's yeast)).